A 1640-amino-acid polypeptide reads, in one-letter code: Clathrin heavy chain 2 (1640 aa).

The residue at position 2 (Ala2) is an N-acetylalanine. Positions 2 to 479 (AQILPVRFQE…TDPMLALSVY (478 aa)) are globular terminal domain. 7 WD40-like repeat regions span residues 24 to 67 (NIGF…RPIS), 68 to 107 (AESA…MAEE), 108 to 149 (VIFW…TSLV), 150 to 195 (GCQV…QPIE), 196 to 257 (GHAA…PEAQ), 258 to 301 (NDFP…ISAD), and 302 to 330 (TIFV…VCVE). Ser67 carries the phosphoserine modification. Position 184 is a phosphotyrosine (Tyr184). Thr394 is modified (phosphothreonine). Positions 449 to 465 (EKWLKEDKLECSEELGD) are binding site for the uncoating ATPase, involved in lattice disassembly. Residues 480 to 523 (LRANVPSKVIQCFAETGQFQKIVLYAKKVGYTPDWIFLLRGVMK) form a flexible linker region. A distal segment region spans residues 524–634 (ISPEQGLQFS…QALEHYTDLY (111 aa)). Residues 524 to 1640 (ISPEQGLQFS…PLVFDFDGHE (1117 aa)) form a heavy chain arm region. CHCR repeat units lie at residues 537-683 (VQDE…QLCV), 686-828 (ASKY…SEEV), 833-972 (IMAV…QLID), 979-1124 (LSET…VKEA), 1128-1269 (YIRG…FRFA), 1274-1420 (LHIV…LLIN), and 1423-1566 (LLVL…RECF). At Tyr634 the chain carries Phosphotyrosine. Residues 639–1640 (AVVHTHLLNP…PLVFDFDGHE (1002 aa)) are proximal segment. An N6-succinyllysine modification is found at Lys737. N6-acetyllysine is present on Lys856. Position 899 is a phosphotyrosine (Tyr899). The residue at position 1167 (Ser1167) is a Phosphoserine. Position 1206 is a phosphotyrosine (Tyr1206). The interval 1213–1522 (AAKLLYSNVS…YLYKGNNWWA (310 aa)) is involved in binding clathrin light chain. Ser1229 carries the post-translational modification Phosphoserine. N6-acetyllysine; alternate is present on Lys1441. N6-succinyllysine; alternate is present on Lys1441. Phosphotyrosine occurs at positions 1477 and 1487. Ser1494 is subject to Phosphoserine. The residue at position 1501 (Lys1501) is an N6-acetyllysine. The tract at residues 1551–1640 (QKLLQWFLEE…PLVFDFDGHE (90 aa)) is trimerization.

Belongs to the clathrin heavy chain family. As to quaternary structure, clathrin triskelions, composed of 3 heavy chains and 3 light chains, are the basic subunits of the clathrin coat. In the presence of light chains, hub assembly is influenced by both the pH and the concentration of calcium. May interact with OCRL. Interacts with AFTPH/aftiphilin. As to expression, maximal levels in skeletal muscle. High levels in heart and testis. Low expression detected in all other tissues.

The protein resides in the cytoplasmic vesicle membrane. It localises to the membrane. The protein localises to the coated pit. Its function is as follows. Clathrin is the major protein of the polyhedral coat of coated pits and vesicles. Two different adapter protein complexes link the clathrin lattice either to the plasma membrane or to the trans-Golgi network. The sequence is that of Clathrin heavy chain 2 (CLTCL1) from Homo sapiens (Human).